Reading from the N-terminus, the 355-residue chain is Zinc finger protein CONSTANS-LIKE 5 (355 aa).

Zn(2+) contacts are provided by Cys22, Cys25, Cys45, His50, Cys61, Cys64, Cys84, and His89. The segment at 22–60 (CDACKSVTAAVFCRVDSAFLCIACDTRIHSFTRHERVWV) adopts a B box-type 1; atypical zinc-finger fold. Residues 61 to 103 (CEVCEQAPAAVTCKADAAALCVSCDADIHSANPLASRHERVPV) form a B box-type 2; atypical zinc finger. The 43-residue stretch at 285 to 327 (REARVLRYREKRKNRKFEKTIRYASRKAYAESRPRIKGRFAKR) folds into the CCT domain.

Belongs to the CONSTANS family.

It is found in the nucleus. The protein is Zinc finger protein CONSTANS-LIKE 5 (COL5) of Arabidopsis thaliana (Mouse-ear cress).